A 433-amino-acid polypeptide reads, in one-letter code: Signal recognition particle 54 kDa protein (433 aa).

Residues 106 to 113 (GVEGSGKT), 186 to 190 (DTAGR), and 244 to 247 (TKMD) contribute to the GTP site.

Belongs to the GTP-binding SRP family. SRP54 subfamily. In terms of assembly, part of the signal recognition particle protein translocation system, which is composed of SRP and FtsY. Archaeal SRP consists of a 7S RNA molecule of 300 nucleotides and two protein subunits: SRP54 and SRP19.

It localises to the cytoplasm. The catalysed reaction is GTP + H2O = GDP + phosphate + H(+). Functionally, involved in targeting and insertion of nascent membrane proteins into the cytoplasmic membrane. Binds to the hydrophobic signal sequence of the ribosome-nascent chain (RNC) as it emerges from the ribosomes. The SRP-RNC complex is then targeted to the cytoplasmic membrane where it interacts with the SRP receptor FtsY. The polypeptide is Signal recognition particle 54 kDa protein (Pyrobaculum neutrophilum (strain DSM 2338 / JCM 9278 / NBRC 100436 / V24Sta) (Thermoproteus neutrophilus)).